A 336-amino-acid polypeptide reads, in one-letter code: Atypical chemokine receptor 1 (336 aa).

Residues 1–63 (MGNCLHTAEL…CNLLDDSALP (63 aa)) are Extracellular-facing. N-linked (GlcNAc...) asparagine glycans are attached at residues N16, N27, and N33. Disulfide bonds link C51/C276 and C129/C195. The helical transmembrane segment at 64-84 (FFILTSVLGILASSTVLFILF) threads the bilayer. At 85 to 95 (RPLFRWQLCPG) the chain is on the cytoplasmic side. The chain crosses the membrane as a helical span at residues 96–116 (WPVLAQLAVGSALFSIVVPIL). Residues 117–129 (APGLGSTHSSALC) are Extracellular-facing. The chain crosses the membrane as a helical span at residues 130-153 (SLGYCVWYGSAFAQALLLGCHASL). Residues 154-166 (GHRLGAGQVPGLT) are Cytoplasmic-facing. Residues 167-187 (LGLTVGIWGVAALLTLPVTLA) traverse the membrane as a helical segment. Over 188–207 (SGASGGLCTPIHSTELKALQ) the chain is Extracellular. The chain crosses the membrane as a helical span at residues 208-228 (ATHTVACLAIFVLLPLGLFGA). The Cytoplasmic segment spans residues 229 to 244 (KGLKKALGMGPGPWMN). A helical transmembrane segment spans residues 245 to 265 (ILWAWFIFWWPHGVVLGLDFL). The Extracellular segment spans residues 266–287 (VRSKLLLLSTCLAQQALDLLLN). Residues 288 to 308 (LAEALAILHCVATPLILALFY) form a helical membrane-spanning segment. Residues 309-336 (HQATRTLLPSLPLPEGWSSHLDTLGSKS) lie on the Cytoplasmic side of the membrane.

It belongs to the G-protein coupled receptor 1 family. Atypical chemokine receptor subfamily.

It is found in the early endosome. Its subcellular location is the recycling endosome. The protein resides in the membrane. Atypical chemokine receptor that controls chemokine levels and localization via high-affinity chemokine binding that is uncoupled from classic ligand-driven signal transduction cascades, resulting instead in chemokine sequestration, degradation, or transcytosis. Also known as interceptor (internalizing receptor) or chemokine-scavenging receptor or chemokine decoy receptor. Has a promiscuous chemokine-binding profile, interacting with inflammatory chemokines of both the CXC and the CC subfamilies but not with homeostatic chemokines. Acts as a receptor for chemokines including CCL2, CCL5, CCL7, CCL11, CCL13, CCL14, CCL17, CXCL5, CXCL6, IL8/CXCL8, CXCL11, GRO, RANTES, MCP-1 and TARC. May regulate chemokine bioavailability and, consequently, leukocyte recruitment through two distinct mechanisms: when expressed in endothelial cells, it sustains the abluminal to luminal transcytosis of tissue-derived chemokines and their subsequent presentation to circulating leukocytes; when expressed in erythrocytes, serves as blood reservoir of cognate chemokines but also as a chemokine sink, buffering potential surges in plasma chemokine levels. This is Atypical chemokine receptor 1 (ACKR1) from Gorilla gorilla gorilla (Western lowland gorilla).